The following is a 348-amino-acid chain: Small ribosomal subunit protein mS45 (348 aa).

Low complexity predominate over residues 37 to 57 (SCSSSSPQSSQPTTHQQQCSS). Residues 37–63 (SCSSSSPQSSQPTTHQQQCSSFSTTAP) are disordered.

It belongs to the mitochondrion-specific ribosomal protein mS45 family. In terms of assembly, component of the mitochondrial small ribosomal subunit (mt-SSU). Mature N.crassa 74S mitochondrial ribosomes consist of a small (37S) and a large (54S) subunit. The 37S small subunit contains a 16S ribosomal RNA (16S mt-rRNA) and 32 different proteins. The 54S large subunit contains a 23S rRNA (23S mt-rRNA) and 42 different proteins.

It is found in the mitochondrion. In terms of biological role, component of the mitochondrial ribosome (mitoribosome), a dedicated translation machinery responsible for the synthesis of mitochondrial genome-encoded proteins, including at least some of the essential transmembrane subunits of the mitochondrial respiratory chain. The mitoribosomes are attached to the mitochondrial inner membrane and translation products are cotranslationally integrated into the membrane. The polypeptide is Small ribosomal subunit protein mS45 (mrps35) (Neurospora crassa (strain ATCC 24698 / 74-OR23-1A / CBS 708.71 / DSM 1257 / FGSC 987)).